The sequence spans 147 residues: Protein phosphatase 1 regulatory subunit 14B (147 aa).

Positions methionine 1–proline 15 are enriched in low complexity. The tract at residues methionine 1–lysine 55 is disordered. At alanine 2 the chain carries N-acetylalanine. Serine 21 is subject to Phosphoserine. A Phosphotyrosine modification is found at tyrosine 29. Serine 32 carries the phosphoserine modification. The residue at position 57 (threonine 57) is a Phosphothreonine. The stretch at aspartate 61–methionine 103 forms a coiled coil.

The protein belongs to the PP1 inhibitor family. Post-translationally, phosphorylated primarily on Thr-57 by PKC (in vitro). An unknown Ser is also phosphorylated by PKC (in vitro). Ubiquitous. Highly expressed in testis. Detected at low levels in the other tissues tested. Highly expressed in cardiac muscle, bladder and aorta (at protein level).

It localises to the cytoplasm. In terms of biological role, inhibitor of PPP1CA. Has over 50-fold higher inhibitory activity when phosphorylated. The sequence is that of Protein phosphatase 1 regulatory subunit 14B (Ppp1r14b) from Mus musculus (Mouse).